The primary structure comprises 225 residues: NAD(P)H-quinone oxidoreductase subunit K, chloroplastic (225 aa).

Residues Cys-43, Cys-44, Cys-108, and Cys-139 each contribute to the [4Fe-4S] cluster site.

The protein belongs to the complex I 20 kDa subunit family. In terms of assembly, NDH is composed of at least 16 different subunits, 5 of which are encoded in the nucleus. Requires [4Fe-4S] cluster as cofactor.

It localises to the plastid. The protein localises to the chloroplast thylakoid membrane. It catalyses the reaction a plastoquinone + NADH + (n+1) H(+)(in) = a plastoquinol + NAD(+) + n H(+)(out). The catalysed reaction is a plastoquinone + NADPH + (n+1) H(+)(in) = a plastoquinol + NADP(+) + n H(+)(out). NDH shuttles electrons from NAD(P)H:plastoquinone, via FMN and iron-sulfur (Fe-S) centers, to quinones in the photosynthetic chain and possibly in a chloroplast respiratory chain. The immediate electron acceptor for the enzyme in this species is believed to be plastoquinone. Couples the redox reaction to proton translocation, and thus conserves the redox energy in a proton gradient. The polypeptide is NAD(P)H-quinone oxidoreductase subunit K, chloroplastic (Lactuca sativa (Garden lettuce)).